The chain runs to 374 residues: uncharacterized protein (374 aa).

Low complexity predominate over residues 86 to 104; sequence RPAATAGTTPATGASGSAR. The segment at 86 to 109 is disordered; sequence RPAATAGTTPATGASGSARPTDAA. The region spanning 179–354 is the Macro domain; the sequence is WWRRSNTTRG…LQRVVFAVHG (176 aa).

This is an uncharacterized protein from Mycobacterium tuberculosis (strain CDC 1551 / Oshkosh).